The chain runs to 258 residues: NAD kinase (258 aa).

Catalysis depends on D45, which acts as the Proton acceptor. NAD(+)-binding positions include 45 to 46, 117 to 118, D147, A155, 158 to 163, and A182; these read DG, NE, and TAYNYS.

It belongs to the NAD kinase family. A divalent metal cation is required as a cofactor.

The protein localises to the cytoplasm. It catalyses the reaction NAD(+) + ATP = ADP + NADP(+) + H(+). Involved in the regulation of the intracellular balance of NAD and NADP, and is a key enzyme in the biosynthesis of NADP. Catalyzes specifically the phosphorylation on 2'-hydroxyl of the adenosine moiety of NAD to yield NADP. The protein is NAD kinase of Xanthomonas oryzae pv. oryzae (strain MAFF 311018).